Here is a 345-residue protein sequence, read N- to C-terminus: Dimethyladenosine transferase 1, mitochondrial (345 aa).

The N-terminal 27 residues, 1–27, are a transit peptide targeting the mitochondrion; sequence MAASGKLGTFRLPPLPTIREIIKLFGL. S-adenosyl-L-methionine-binding positions include 35–38, Asn36, Leu38, Gly63, Glu85, Asp111, and Asn141; that span reads QNFL.

This sequence belongs to the class I-like SAM-binding methyltransferase superfamily. rRNA adenine N(6)-methyltransferase family. KsgA subfamily. As to quaternary structure, interacts with mitochondrial RNA polymerase POLRMT. Interacts with TFAM.

The protein resides in the mitochondrion. In terms of biological role, S-adenosyl-L-methionine-dependent methyltransferase which specifically dimethylates mitochondrial 12S rRNA at the conserved stem loop. Also required for basal transcription of mitochondrial DNA, probably via its interaction with POLRMT and TFAM. Stimulates transcription independently of the methyltransferase activity. This Rattus norvegicus (Rat) protein is Dimethyladenosine transferase 1, mitochondrial (Tfb1m).